The chain runs to 769 residues: MCGSALAFFTAAFVCLQNDRRGPASFLWAAWVFSLVLGLGQGEDNRCASSNAASCARCLALGPECGWCVQEDFISGGSRSERCDIVSNLISKGCSVDSIEYPSVHVIIPTENEINTQVTPGEVSIQLRPGAEANFMLKVHPLKKYPVDLYYLVDVSASMHNNIEKLNSVGNDLSRKMAFFSRDFRLGFGSYVDKTVSPYISIHPERIHNQCSDYNLDCMPPHGYIHVLSLTENITEFEKAVHRQKISGNIDTPEGGFDAMLQAAVCESHIGWRKEAKRLLLVMTDQTSHLALDSKLAGIVVPNDGNCHLKNNVYVKSTTMEHPSLGQLSEKLIDNNINVIFAVQGKQFHWYKDLLPLLPGTIAGEIESKAANLNNLVVEAYQKLISEVKVQVENQVQGIYFNITAICPDGSRKPGMEGCRNVTSNDEVLFNVTVTMKKCDVTGGKNYAIIKPIGFNETAKIHIHRNCSCQCEDNRGPKGKCVDETFLDSKCFQCDENKCHFDEDQFSSESCKSHKDQPVCSGRGVCVCGKCSCHKIKLGKVYGKYCEKDDFSCPYHHGNLCAGHGECEAGRCQCFSGWEGDRCQCPSAAAQHCVNSKGQVCSGRGTCVCGRCECTDPRSIGRFCEHCPTCYTACKENWNCMQCLHPHNLSQAILDQCKTSCALMEQQHYVDQTSECFSSPSYLRIFFIIFIVTFLIGLLKVLIIRQVILQWNSNKIKSSSDYRVSASKKDKLILQSVCTRAVTYRREKPEEIKMDISKLNAHETFRCNF.

Positions 1–42 (MCGSALAFFTAAFVCLQNDRRGPASFLWAAWVFSLVLGLGQG) are cleaved as a signal peptide. Over 43 to 684 (EDNRCASSNA…ECFSSPSYLR (642 aa)) the chain is Extracellular. The PSI domain maps to 46 to 95 (RCASSNAASCARCLALGPECGWCVQEDFISGGSRSERCDIVSNLISKGCS). Cystine bridges form between Cys-47-Cys-65, Cys-55-Cys-469, Cys-58-Cys-83, Cys-68-Cys-94, Cys-211-Cys-218, Cys-266-Cys-307, Cys-407-Cys-419, Cys-439-Cys-467, Cys-471-Cys-491, Cys-471-Cys-494, Cys-481-Cys-494, Cys-499-Cys-528, Cys-511-Cys-526, Cys-520-Cys-531, Cys-533-Cys-546, Cys-553-Cys-567, Cys-561-Cys-572, Cys-574-Cys-583, Cys-585-Cys-609, Cys-593-Cys-607, Cys-601-Cys-612, Cys-614-Cys-624, Cys-627-Cys-630, Cys-634-Cys-661, and Cys-640-Cys-657. In terms of domain architecture, VWFA spans 146-384 (PVDLYYLVDV…NLVVEAYQKL (239 aa)). Mg(2+) is bound by residues Asp-154 and Ser-156. Asp-193 serves as a coordination point for Ca(2+). Asn-233 is a glycosylation site (N-linked (GlcNAc...) asparagine). Asn-249, Asp-251, Pro-253, and Glu-254 together coordinate Ca(2+). Glu-254 is a binding site for Mg(2+). Asn-402 carries N-linked (GlcNAc...) asparagine glycosylation. N-linked (GlcNAc...) asparagine glycosylation is found at Asn-421, Asn-431, Asn-456, and Asn-466. 4 I-EGF domains span residues 471-495 (CEDN…FQCD), 499-547 (CHFD…KYCE), 548-584 (KDDF…DRCQ), and 585-625 (CPSA…RFCE). N-linked (GlcNAc...) asparagine glycosylation is present at Asn-648. Residues 685–704 (IFFIIFIVTFLIGLLKVLII) form a helical membrane-spanning segment. At 705-769 (RQVILQWNSN…NAHETFRCNF (65 aa)) the chain is on the cytoplasmic side.

It belongs to the integrin beta chain family. Heterodimer of an alpha and a beta subunit. Beta-8 (ITGB8) associates with alpha-V (ITGAV) to form ITGAV:ITGB8. ITGAV:ITGB8 interacts with TGFB1. Placenta, kidney, brain, ovary, uterus and in several transformed cells. Transiently expressed in 293 human embryonic kidney cells.

It localises to the cell membrane. Its function is as follows. Integrin alpha-V:beta-8 (ITGAV:ITGB8) is a receptor for fibronectin. It recognizes the sequence R-G-D in its ligands. Integrin alpha-V:beta-6 (ITGAV:ITGB6) mediates R-G-D-dependent release of transforming growth factor beta-1 (TGF-beta-1) from regulatory Latency-associated peptide (LAP), thereby playing a key role in TGF-beta-1 activation on the surface of activated regulatory T-cells (Tregs). Required during vasculogenesis. The sequence is that of Integrin beta-8 from Homo sapiens (Human).